Here is a 507-residue protein sequence, read N- to C-terminus: Cysteine--tRNA ligase (507 aa).

Zn(2+) is bound at residue Cys29. Positions 31–41 (PTVYDVPHIGN) match the 'HIGH' region motif. Zn(2+) is bound by residues Cys207, His232, and Glu236. Positions 265 to 269 (KMSKS) match the 'KMSKS' region motif. Lys268 provides a ligand contact to ATP.

It belongs to the class-I aminoacyl-tRNA synthetase family. Monomer. Zn(2+) serves as cofactor.

It localises to the cytoplasm. It catalyses the reaction tRNA(Cys) + L-cysteine + ATP = L-cysteinyl-tRNA(Cys) + AMP + diphosphate. In Neorickettsia sennetsu (strain ATCC VR-367 / Miyayama) (Ehrlichia sennetsu), this protein is Cysteine--tRNA ligase.